The primary structure comprises 412 residues: MQTYLVGGAVRDRLLGLPQGDRDHLVVGATVEQMLALGFTQVGRDFPVFLHPKTQQEYALARTERKQGRGYTGFVCHASPEVTLEQDLLRRDLTVNAIAEDEAGQLHDPYGGIEDLKQRLLRHVSPAFAEDPLRILRVARFAARFHAQGFVVAPETLALMREMTEAGELAHLTPERVWKELEKVLLGPTPQVFFEVLRECGALAALFPELDALFGVPAPAKWHPEIDTGIHTMMVLAQACRLSPELAVRFAALCHDFGKGLTPPEFWPSHHGHGQKGLPLIRDFCERFRAPNECRDLALLVSDLHTHIHIAFELKPATLLKVFDKADAWRRPERFAQLLDACRADFHGRTGFEERVYAEPDYVARALAAAQAVPVKEIVAAGFKGEAIREQLAKRRLDAISRVRDEWTFLED.

Residues Gly8 and Arg11 each contribute to the ATP site. Positions 8 and 11 each coordinate CTP. Mg(2+) is bound by residues Asp21 and Asp23. ATP contacts are provided by Arg91, Arg137, and Arg140. 3 residues coordinate CTP: Arg91, Arg137, and Arg140. The 102-residue stretch at 228–329 folds into the HD domain; sequence TGIHTMMVLA…LKVFDKADAW (102 aa).

Belongs to the tRNA nucleotidyltransferase/poly(A) polymerase family. Bacterial CCA-adding enzyme type 1 subfamily. Monomer. Can also form homodimers and oligomers. Requires Mg(2+) as cofactor. Ni(2+) is required as a cofactor.

It carries out the reaction a tRNA precursor + 2 CTP + ATP = a tRNA with a 3' CCA end + 3 diphosphate. It catalyses the reaction a tRNA with a 3' CCA end + 2 CTP + ATP = a tRNA with a 3' CCACCA end + 3 diphosphate. In terms of biological role, catalyzes the addition and repair of the essential 3'-terminal CCA sequence in tRNAs without using a nucleic acid template. Adds these three nucleotides in the order of C, C, and A to the tRNA nucleotide-73, using CTP and ATP as substrates and producing inorganic pyrophosphate. tRNA 3'-terminal CCA addition is required both for tRNA processing and repair. Also involved in tRNA surveillance by mediating tandem CCA addition to generate a CCACCA at the 3' terminus of unstable tRNAs. While stable tRNAs receive only 3'-terminal CCA, unstable tRNAs are marked with CCACCA and rapidly degraded. The sequence is that of Multifunctional CCA protein from Aeromonas hydrophila subsp. hydrophila (strain ATCC 7966 / DSM 30187 / BCRC 13018 / CCUG 14551 / JCM 1027 / KCTC 2358 / NCIMB 9240 / NCTC 8049).